The primary structure comprises 103 residues: Non-histone chromosomal protein HMG-14B (103 aa).

A disordered region spans residues Met1–Glu103. Positions Val29–Lys50 are enriched in basic and acidic residues. The span at Ala51–Lys60 shows a compositional bias: basic residues. A compositionally biased stretch (basic and acidic residues) spans Ala94–Glu103.

Belongs to the HMGN family.

It localises to the nucleus. In terms of biological role, binds to the inner side of the nucleosomal DNA thus altering the interaction between the DNA and the histone octamer. May be involved in the process which maintains transcribable genes in a unique chromatin conformation. This Gallus gallus (Chicken) protein is Non-histone chromosomal protein HMG-14B (HMG14).